Here is a 250-residue protein sequence, read N- to C-terminus: MAGHSKWANIKRQKARVDAQKGKIFARLSRAIIIAARHGGGDPAGNFQLRSAIEKAKAAGIPSENIERAIAKGTGTLDSDAPLEAIRYEGYGPGGVAFLIEALTDNRNRTAADLRAAFNKQGGNLGETGCVGWMFEQWGIVTVTAPRDEEAFLEALLAADVETYEILEEVAEVRCPVPALETVSETLKEHGYTVLDTESRWIPMNTVEITDEDTARRVLKLMDALENLDDIQSVATNVTMSDALMEAMYV.

The protein belongs to the TACO1 family.

The protein resides in the cytoplasm. The sequence is that of Probable transcriptional regulatory protein tll0175 from Thermosynechococcus vestitus (strain NIES-2133 / IAM M-273 / BP-1).